The chain runs to 666 residues: Zinc finger protein 710 (666 aa).

Glycyl lysine isopeptide (Lys-Gly) (interchain with G-Cter in SUMO2) cross-links involve residues K110 and K113. The disordered stretch occupies residues K113–A141. 3 consecutive C2H2-type zinc fingers follow at residues W297–H319, H325–H347, and H353–H375. K379 is covalently cross-linked (Glycyl lysine isopeptide (Lys-Gly) (interchain with G-Cter in SUMO2)). C2H2-type zinc fingers lie at residues Y381–H403, H409–H431, Y437–H459, F465–H487, F493–H515, Y521–H543, F549–H571, and F577–H600.

This sequence belongs to the krueppel C2H2-type zinc-finger protein family.

Its subcellular location is the nucleus. Its function is as follows. May be involved in transcriptional regulation. This Mus musculus (Mouse) protein is Zinc finger protein 710 (Znf710).